A 30-amino-acid chain; its full sequence is Sperm protamine P5 (30 aa).

The segment at Y1–G30 is disordered.

As to expression, testis.

The protein localises to the nucleus. The protein resides in the chromosome. Protamines substitute for histones in the chromatin of sperm during the haploid phase of spermatogenesis. They compact sperm DNA into a highly condensed, stable and inactive complex. The polypeptide is Sperm protamine P5 (Octopus vulgaris (Common octopus)).